We begin with the raw amino-acid sequence, 349 residues long: Protein RecA (349 aa).

69-76 (GPESSGKT) serves as a coordination point for ATP.

It belongs to the RecA family.

The protein localises to the cytoplasm. Functionally, can catalyze the hydrolysis of ATP in the presence of single-stranded DNA, the ATP-dependent uptake of single-stranded DNA by duplex DNA, and the ATP-dependent hybridization of homologous single-stranded DNAs. It interacts with LexA causing its activation and leading to its autocatalytic cleavage. This chain is Protein RecA, found in Rippkaea orientalis (strain PCC 8801 / RF-1) (Cyanothece sp. (strain PCC 8801)).